We begin with the raw amino-acid sequence, 210 residues long: Redox-sensing transcriptional repressor Rex (210 aa).

Residues 17 to 56 constitute a DNA-binding region (H-T-H motif); it reads KYYRYLAELMDNDVDRISSKELSEKIGFTASQIRQDLNNF. Position 91–96 (91–96) interacts with NAD(+); sequence GAGNIG.

Belongs to the transcriptional regulatory Rex family. Homodimer.

It is found in the cytoplasm. In terms of biological role, modulates transcription in response to changes in cellular NADH/NAD(+) redox state. This is Redox-sensing transcriptional repressor Rex from Clostridium novyi (strain NT).